Consider the following 178-residue polypeptide: Ribosomal RNA small subunit methyltransferase G (178 aa).

S-adenosyl-L-methionine-binding positions include glycine 54, leucine 59, 105 to 106, and arginine 120; that span reads LE.

It belongs to the methyltransferase superfamily. RNA methyltransferase RsmG family.

The protein resides in the cytoplasm. It catalyses the reaction guanosine(527) in 16S rRNA + S-adenosyl-L-methionine = N(7)-methylguanosine(527) in 16S rRNA + S-adenosyl-L-homocysteine. In terms of biological role, specifically methylates the N7 position of guanine in position 527 of 16S rRNA. The sequence is that of Ribosomal RNA small subunit methyltransferase G from Helicobacter pylori (strain HPAG1).